The primary structure comprises 909 residues: Coatomer subunit beta'-3 (909 aa).

WD repeat units follow at residues 13–52 (QRSE…ITKS), 55–94 (VTEL…KVKV), 97–136 (AHSD…ACTQ), 140–180 (GHSH…PNFT), 183–224 (AHQK…CVQT), 227–266 (GHTH…LENT), 269–309 (YGLE…ASMD), 351–390 (TCDL…RSFG), and 461–501 (QIDV…SHFD). Residues 862-909 (EENGHVENEGDEEEQQEEEVNEEEGVVDADSTDGAVLVNGSEVLTPHP) are disordered. The span at 870-892 (EGDEEEQQEEEVNEEEGVVDADS) shows a compositional bias: acidic residues.

Belongs to the WD repeat COPB2 family. Oligomeric complex that consists of at least the alpha, beta, beta', gamma, delta, epsilon and zeta subunits.

The protein localises to the cytoplasm. The protein resides in the golgi apparatus membrane. Its subcellular location is the cytoplasmic vesicle. It localises to the COPI-coated vesicle membrane. The coatomer is a cytosolic protein complex that binds to dilysine motifs and reversibly associates with Golgi non-clathrin-coated vesicles, which further mediate biosynthetic protein transport from the ER, via the Golgi up to the trans Golgi network. Coatomer complex is required for budding from Golgi membranes, and is essential for the retrograde Golgi-to-ER transport of dilysine-tagged proteins. This chain is Coatomer subunit beta'-3, found in Arabidopsis thaliana (Mouse-ear cress).